The following is a 381-amino-acid chain: Queuine tRNA-ribosyltransferase (381 aa).

D96 functions as the Proton acceptor in the catalytic mechanism. Substrate contacts are provided by residues 96–100 (DSGGF), D150, Q193, and G220. The tract at residues 251–257 (GVGSPDS) is RNA binding. D270 acts as the Nucleophile in catalysis. Residues 275-279 (TRIAR) are RNA binding; important for wobble base 34 recognition. Residues C308, C310, C313, and H339 each coordinate Zn(2+).

The protein belongs to the queuine tRNA-ribosyltransferase family. As to quaternary structure, homodimer. Within each dimer, one monomer is responsible for RNA recognition and catalysis, while the other monomer binds to the replacement base PreQ1. Requires Zn(2+) as cofactor.

The enzyme catalyses 7-aminomethyl-7-carbaguanine + guanosine(34) in tRNA = 7-aminomethyl-7-carbaguanosine(34) in tRNA + guanine. Its pathway is tRNA modification; tRNA-queuosine biosynthesis. Its function is as follows. Catalyzes the base-exchange of a guanine (G) residue with the queuine precursor 7-aminomethyl-7-deazaguanine (PreQ1) at position 34 (anticodon wobble position) in tRNAs with GU(N) anticodons (tRNA-Asp, -Asn, -His and -Tyr). Catalysis occurs through a double-displacement mechanism. The nucleophile active site attacks the C1' of nucleotide 34 to detach the guanine base from the RNA, forming a covalent enzyme-RNA intermediate. The proton acceptor active site deprotonates the incoming PreQ1, allowing a nucleophilic attack on the C1' of the ribose to form the product. After dissociation, two additional enzymatic reactions on the tRNA convert PreQ1 to queuine (Q), resulting in the hypermodified nucleoside queuosine (7-(((4,5-cis-dihydroxy-2-cyclopenten-1-yl)amino)methyl)-7-deazaguanosine). This Lysinibacillus sphaericus (strain C3-41) protein is Queuine tRNA-ribosyltransferase.